The following is a 182-amino-acid chain: Ribosome maturation factor RimM (182 aa).

Positions 102-182 (GEGDYYWKDL…TIEVDWDPGF (81 aa)) constitute a PRC barrel domain.

Belongs to the RimM family. Binds ribosomal protein uS19.

Its subcellular location is the cytoplasm. Its function is as follows. An accessory protein needed during the final step in the assembly of 30S ribosomal subunit, possibly for assembly of the head region. Essential for efficient processing of 16S rRNA. May be needed both before and after RbfA during the maturation of 16S rRNA. It has affinity for free ribosomal 30S subunits but not for 70S ribosomes. In Pectobacterium carotovorum subsp. carotovorum (strain PC1), this protein is Ribosome maturation factor RimM.